Reading from the N-terminus, the 365-residue chain is Probable receptor-like protein kinase At2g47060 (365 aa).

A disordered region spans residues Asp18–Pro48. Positions Phe73 to Leu353 constitute a Protein kinase domain. Residues Ile79–Val87 and Lys101 contribute to the ATP site. Tyr145 is modified (phosphotyrosine). The active-site Proton acceptor is Asp203. Phosphoserine is present on residues Ser207 and Ser237. Phosphothreonine occurs at positions 238 and 243. Tyr251 is subject to Phosphotyrosine.

It belongs to the protein kinase superfamily. Ser/Thr protein kinase family.

It carries out the reaction L-seryl-[protein] + ATP = O-phospho-L-seryl-[protein] + ADP + H(+). It catalyses the reaction L-threonyl-[protein] + ATP = O-phospho-L-threonyl-[protein] + ADP + H(+). The sequence is that of Probable receptor-like protein kinase At2g47060 from Arabidopsis thaliana (Mouse-ear cress).